The chain runs to 384 residues: GTPase Obg (384 aa).

The region spanning 1-159 (MKFIDEAKIE…RSLQLELKVL (159 aa)) is the Obg domain. Positions 20–46 (ATSFRREKFVPRGGPDGGDGGKGGSVW) are disordered. Positions 33-43 (GPDGGDGGKGG) are enriched in gly residues. Residues 160-348 (ADVGLLGMPN…LVHQINQYLI (189 aa)) form the OBG-type G domain. Residues 166 to 173 (GMPNAGKS), 191 to 195 (FTTLH), 213 to 216 (DIPG), 284 to 287 (NKLD), and 329 to 331 (SAL) contribute to the GTP site. Mg(2+) is bound by residues Ser173 and Thr193. Residues 364 to 384 (ATNVEIAEQQPKTDTGVFKPE) are disordered.

This sequence belongs to the TRAFAC class OBG-HflX-like GTPase superfamily. OBG GTPase family. In terms of assembly, monomer. It depends on Mg(2+) as a cofactor.

It is found in the cytoplasm. Functionally, an essential GTPase which binds GTP, GDP and possibly (p)ppGpp with moderate affinity, with high nucleotide exchange rates and a fairly low GTP hydrolysis rate. Plays a role in control of the cell cycle, stress response, ribosome biogenesis and in those bacteria that undergo differentiation, in morphogenesis control. This is GTPase Obg from Neisseria meningitidis serogroup A / serotype 4A (strain DSM 15465 / Z2491).